Consider the following 397-residue polypeptide: Ribosomal RNA large subunit methyltransferase I (397 aa).

In terms of domain architecture, PUA spans 2 to 79; sequence TAAIYLVKGR…KEEINKAFFV (78 aa).

Belongs to the methyltransferase superfamily. RlmI family.

The protein localises to the cytoplasm. The catalysed reaction is cytidine(1962) in 23S rRNA + S-adenosyl-L-methionine = 5-methylcytidine(1962) in 23S rRNA + S-adenosyl-L-homocysteine + H(+). In terms of biological role, specifically methylates the cytosine at position 1962 (m5C1962) of 23S rRNA. The sequence is that of Ribosomal RNA large subunit methyltransferase I from Vibrio parahaemolyticus serotype O3:K6 (strain RIMD 2210633).